A 105-amino-acid chain; its full sequence is UPF0235 protein CT1832 (105 aa).

This sequence belongs to the UPF0235 family.

This Chlorobaculum tepidum (strain ATCC 49652 / DSM 12025 / NBRC 103806 / TLS) (Chlorobium tepidum) protein is UPF0235 protein CT1832.